The sequence spans 449 residues: Glucose-6-phosphate isomerase 1 (449 aa).

Position 38 is a phosphothreonine (Thr-38). The active-site Proton donor is Glu-290. Catalysis depends on residues His-311 and Lys-425.

It belongs to the GPI family. As to quaternary structure, homodimer.

It localises to the cytoplasm. The enzyme catalyses alpha-D-glucose 6-phosphate = beta-D-fructose 6-phosphate. It participates in carbohydrate biosynthesis; gluconeogenesis. Its pathway is carbohydrate degradation; glycolysis; D-glyceraldehyde 3-phosphate and glycerone phosphate from D-glucose: step 2/4. Its function is as follows. Catalyzes the reversible isomerization of glucose-6-phosphate to fructose-6-phosphate. The polypeptide is Glucose-6-phosphate isomerase 1 (Geobacillus stearothermophilus (Bacillus stearothermophilus)).